Here is a 281-residue protein sequence, read N- to C-terminus: Pantothenate synthetase (281 aa).

30-37 (MGNLHQGH) is an ATP binding site. His-37 (proton donor) is an active-site residue. Position 61 (Gln-61) interacts with (R)-pantoate. Gln-61 is a binding site for beta-alanine. 149–152 (GNKD) provides a ligand contact to ATP. Gln-155 serves as a coordination point for (R)-pantoate. ATP contacts are provided by residues Ile-178 and 186 to 189 (MSSR).

The protein belongs to the pantothenate synthetase family. As to quaternary structure, homodimer.

The protein localises to the cytoplasm. The catalysed reaction is (R)-pantoate + beta-alanine + ATP = (R)-pantothenate + AMP + diphosphate + H(+). Its pathway is cofactor biosynthesis; (R)-pantothenate biosynthesis; (R)-pantothenate from (R)-pantoate and beta-alanine: step 1/1. Functionally, catalyzes the condensation of pantoate with beta-alanine in an ATP-dependent reaction via a pantoyl-adenylate intermediate. This chain is Pantothenate synthetase, found in Shewanella baltica (strain OS195).